A 448-amino-acid polypeptide reads, in one-letter code: Probable glycine dehydrogenase (decarboxylating) subunit 1 (448 aa).

It belongs to the GcvP family. N-terminal subunit subfamily. The glycine cleavage system is composed of four proteins: P, T, L and H. In this organism, the P 'protein' is a heterodimer of two subunits.

It catalyses the reaction N(6)-[(R)-lipoyl]-L-lysyl-[glycine-cleavage complex H protein] + glycine + H(+) = N(6)-[(R)-S(8)-aminomethyldihydrolipoyl]-L-lysyl-[glycine-cleavage complex H protein] + CO2. In terms of biological role, the glycine cleavage system catalyzes the degradation of glycine. The P protein binds the alpha-amino group of glycine through its pyridoxal phosphate cofactor; CO(2) is released and the remaining methylamine moiety is then transferred to the lipoamide cofactor of the H protein. This chain is Probable glycine dehydrogenase (decarboxylating) subunit 1, found in Pyrococcus furiosus (strain ATCC 43587 / DSM 3638 / JCM 8422 / Vc1).